A 916-amino-acid chain; its full sequence is DNA repair endonuclease XPF (916 aa).

The tract at residues 1 to 457 (MESGQPARRI…EVWMKFRKED (457 aa)) is helicase-like. 2 leucine-zipper regions span residues 233–254 (LNAC…DLSL) and 270–298 (LDPL…LQYL). The residue at position 289 (Lys-289) is an N6-acetyllysine. A disordered region spans residues 460–487 (KRIRKSHKRPKDPQNKERASTKERTLKK). Residues 470 to 483 (KDPQNKERASTKER) show a composition bias toward basic and acidic residues. Positions 486–491 (KKKKRK) match the Nuclear localization signal motif. Residue Lys-500 forms a Glycyl lysine isopeptide (Lys-Gly) (interchain with G-Cter in SUMO2) linkage. 2 disordered regions span residues 502 to 526 (EELE…ESCP) and 660 to 679 (TASA…EQNG). Ser-521 is modified (phosphoserine). Residues 658–813 (RGTASADVST…PSPHATAELF (156 aa)) form a nuclease region. The ERCC4 domain occupies 683–763 (SIVVDMREFR…RPVLLIEFDP (81 aa)). Phosphoserine is present on Ser-764. Residues 837–905 (TLPESEKYNP…QLYDFIHTSF (69 aa)) are hhH2, dimerization with ERCC1. An N6-acetyllysine modification is found at Lys-911.

Belongs to the XPF family. Heterodimer composed of ERCC1 and ERCC4/XPF. Interacts with SLX4/BTBD12; this interaction is direct and links the ERCC1-ERCC4/XPF complex to SLX4, which may coordinate the action of the structure-specific endonuclease during DNA repair. Mg(2+) serves as cofactor. In terms of processing, acetylation at Lys-911 by KAT5 promotes interaction with ERCC1 by disrupting a salt bridge between Glu-907 and Lys-911, thereby exposing a second binding site for ERCC1. Deacetylated by SIRT1.

It localises to the nucleus. Its subcellular location is the chromosome. Functionally, catalytic component of a structure-specific DNA repair endonuclease responsible for the 5-prime incision during DNA repair, and which is essential for nucleotide excision repair (NER) and interstrand cross-link (ICL) repair. This chain is DNA repair endonuclease XPF, found in Homo sapiens (Human).